A 400-amino-acid chain; its full sequence is Elongation factor Tu (400 aa).

The region spanning 10 to 210 (KPHVNVGTIG…ALDSYIPEPV (201 aa)) is the tr-type G domain. The tract at residues 19 to 26 (GHVDHGKT) is G1. 19 to 26 (GHVDHGKT) contributes to the GTP binding site. Thr26 provides a ligand contact to Mg(2+). The G2 stretch occupies residues 66–70 (ILTIA). Residues 87–90 (DCPG) are G3. GTP contacts are provided by residues 87-91 (DCPGH) and 142-145 (NKCD). Residues 142-145 (NKCD) form a G4 region. Residues 180 to 182 (SAI) form a G5 region.

Belongs to the TRAFAC class translation factor GTPase superfamily. Classic translation factor GTPase family. EF-Tu/EF-1A subfamily. In terms of assembly, monomer.

It localises to the cytoplasm. The enzyme catalyses GTP + H2O = GDP + phosphate + H(+). Its function is as follows. GTP hydrolase that promotes the GTP-dependent binding of aminoacyl-tRNA to the A-site of ribosomes during protein biosynthesis. The chain is Elongation factor Tu from Gemmatimonas aurantiaca (strain DSM 14586 / JCM 11422 / NBRC 100505 / T-27).